The primary structure comprises 55 residues: Large ribosomal subunit protein bL33A (55 aa).

This sequence belongs to the bacterial ribosomal protein bL33 family.

This chain is Large ribosomal subunit protein bL33A, found in Mycolicibacterium vanbaalenii (strain DSM 7251 / JCM 13017 / BCRC 16820 / KCTC 9966 / NRRL B-24157 / PYR-1) (Mycobacterium vanbaalenii).